The sequence spans 261 residues: tRNA pseudouridine synthase A (261 aa).

D51 serves as the catalytic Nucleophile. Y109 contributes to the substrate binding site.

The protein belongs to the tRNA pseudouridine synthase TruA family. In terms of assembly, homodimer.

It catalyses the reaction uridine(38/39/40) in tRNA = pseudouridine(38/39/40) in tRNA. Functionally, formation of pseudouridine at positions 38, 39 and 40 in the anticodon stem and loop of transfer RNAs. The sequence is that of tRNA pseudouridine synthase A from Photobacterium profundum (strain SS9).